The following is a 344-amino-acid chain: Eukaryotic translation initiation factor 2 subunit alpha homolog (344 aa).

The 72-residue stretch at 21-92 (DMAVMIQVKN…EKGYIDLSKR (72 aa)) folds into the S1 motif domain. At serine 56 the chain carries Phosphoserine; by GCN2. Residues 312–344 (DNEEMSGDEDSGDEEEDTGMGEVDLDAGAGIIE) form a disordered region. The segment covering 314–336 (EEMSGDEDSGDEEEDTGMGEVDL) has biased composition (acidic residues).

The protein belongs to the eIF-2-alpha family. Heterotrimer composed of an alpha, a beta and a gamma chain. Post-translationally, phosphorylated at Ser-56 by GCN2.

Its function is as follows. Functions in the early steps of protein synthesis by forming a ternary complex with GTP and initiator tRNA. This complex binds to a 40S ribosomal subunit, followed by mRNA binding to form a 43S pre-initiation complex. Junction of the 60S ribosomal subunit to form the 80S initiation complex is preceded by hydrolysis of the GTP bound to eIF-2 and release of an eIF-2-GDP binary complex. In order for eIF-2 to recycle and catalyze another round of initiation, the GDP bound to eIF-2 must exchange with GTP by way of a reaction catalyzed by eIF-2B. This is Eukaryotic translation initiation factor 2 subunit alpha homolog from Arabidopsis thaliana (Mouse-ear cress).